We begin with the raw amino-acid sequence, 238 residues long: MKVSLFVTCLVDMFQTNVGKATVELLERLGCEVDFPEGQICCGQPAYNSGYVHDAKKAMKRMIETFQDSEYVVSPSGSCTTMFREYPHLFQDDPKWADKAKKLADKTYELTDFIVNVLGVEDVGATLHTKATLHTSCHMTRLLGVRKEPMKLLSHVKGLQFTELPGKHNCCGFGGTFSVKMAQISEQMVDEKVECVEETGAEVLIGADCGCLMNIGGRLGRKDKNVKVMHIAEVLNSR.

This sequence belongs to the LutA/YkgE family.

Its function is as follows. Is essential for L-lactate degradation and allows cells to grow with lactate as the sole carbon source. May also allow cells to utilize an alternative carbon source during biofilm formation, since it contributes to the formation of architecturally complex communities when lactate is present. The polypeptide is Lactate utilization protein A (lutA) (Bacillus subtilis (strain 168)).